Reading from the N-terminus, the 539-residue chain is Chaperonin GroEL (539 aa).

ATP contacts are provided by residues Thr-29–Pro-32, Asp-86–Thr-90, Gly-413, Asn-476–Ala-478, and Asp-492.

The protein belongs to the chaperonin (HSP60) family. As to quaternary structure, forms a cylinder of 14 subunits composed of two heptameric rings stacked back-to-back. Interacts with the co-chaperonin GroES.

It is found in the cytoplasm. It carries out the reaction ATP + H2O + a folded polypeptide = ADP + phosphate + an unfolded polypeptide.. Together with its co-chaperonin GroES, plays an essential role in assisting protein folding. The GroEL-GroES system forms a nano-cage that allows encapsulation of the non-native substrate proteins and provides a physical environment optimized to promote and accelerate protein folding. In Staphylococcus haemolyticus (strain JCSC1435), this protein is Chaperonin GroEL.